Consider the following 201-residue polypeptide: Large ribosomal subunit protein uL4 (201 aa).

A disordered region spans residues 44-71 (RAQKTRAEVTGSGKKPWRQKGTGRARSG).

This sequence belongs to the universal ribosomal protein uL4 family. In terms of assembly, part of the 50S ribosomal subunit.

One of the primary rRNA binding proteins, this protein initially binds near the 5'-end of the 23S rRNA. It is important during the early stages of 50S assembly. It makes multiple contacts with different domains of the 23S rRNA in the assembled 50S subunit and ribosome. Its function is as follows. Forms part of the polypeptide exit tunnel. This Pectobacterium carotovorum subsp. carotovorum (strain PC1) protein is Large ribosomal subunit protein uL4.